The chain runs to 152 residues: Endoribonuclease YbeY (152 aa).

Positions 117, 121, and 127 each coordinate Zn(2+).

This sequence belongs to the endoribonuclease YbeY family. Zn(2+) serves as cofactor.

Its subcellular location is the cytoplasm. In terms of biological role, single strand-specific metallo-endoribonuclease involved in late-stage 70S ribosome quality control and in maturation of the 3' terminus of the 16S rRNA. The polypeptide is Endoribonuclease YbeY (Sulfurihydrogenibium sp. (strain YO3AOP1)).